The following is a 372-amino-acid chain: Glutamate 5-kinase (372 aa).

Lysine 14 provides a ligand contact to ATP. Serine 54, aspartate 141, and asparagine 153 together coordinate substrate. 173–174 contacts ATP; that stretch reads TD. Positions 280–358 constitute a PUA domain; sequence RGTLVLDDGA…DAIVGLLGYM (79 aa).

The protein belongs to the glutamate 5-kinase family.

The protein localises to the cytoplasm. It carries out the reaction L-glutamate + ATP = L-glutamyl 5-phosphate + ADP. The protein operates within amino-acid biosynthesis; L-proline biosynthesis; L-glutamate 5-semialdehyde from L-glutamate: step 1/2. Its function is as follows. Catalyzes the transfer of a phosphate group to glutamate to form L-glutamate 5-phosphate. The chain is Glutamate 5-kinase from Pseudomonas fluorescens (strain Pf0-1).